The following is a 64-amino-acid chain: Large ribosomal subunit protein bL32 (64 aa).

Basic residues predominate over residues 1–10 (MAVPKRKTTP). The interval 1–22 (MAVPKRKTTPSKRDMRRANHDK) is disordered. Residues 11–22 (SKRDMRRANHDK) are compositionally biased toward basic and acidic residues.

The protein belongs to the bacterial ribosomal protein bL32 family.

The sequence is that of Large ribosomal subunit protein bL32 from Sorangium cellulosum (strain So ce56) (Polyangium cellulosum (strain So ce56)).